The chain runs to 207 residues: Ion-translocating oxidoreductase complex subunit G (207 aa).

The chain crosses the membrane as a helical span at residues 11 to 31 (GILLGFIALLCTIISTGIFFL). Threonine 175 carries the post-translational modification FMN phosphoryl threonine.

This sequence belongs to the RnfG family. In terms of assembly, the complex is composed of six subunits: RnfA, RnfB, RnfC, RnfD, RnfE and RnfG. It depends on FMN as a cofactor.

It localises to the cell inner membrane. In terms of biological role, part of a membrane-bound complex that couples electron transfer with translocation of ions across the membrane. The sequence is that of Ion-translocating oxidoreductase complex subunit G from Haemophilus influenzae (strain 86-028NP).